The chain runs to 178 residues: Cytidylate kinase (178 aa).

7 to 15 (GLPGTGTTT) is a binding site for ATP.

The protein belongs to the cytidylate kinase family. Type 2 subfamily.

It is found in the cytoplasm. It carries out the reaction CMP + ATP = CDP + ADP. The enzyme catalyses dCMP + ATP = dCDP + ADP. In Methanococcus aeolicus (strain ATCC BAA-1280 / DSM 17508 / OCM 812 / Nankai-3), this protein is Cytidylate kinase.